The primary structure comprises 315 residues: Ribose-phosphate pyrophosphokinase (315 aa).

ATP is bound by residues Asp37–Glu39 and Arg96–Gln97. Residues His131 and Asp171 each contribute to the Mg(2+) site. Lys195 is a catalytic residue. D-ribose 5-phosphate is bound by residues Arg197, Asp221, and Asp225 to Thr229.

Belongs to the ribose-phosphate pyrophosphokinase family. Class I subfamily. Homohexamer. It depends on Mg(2+) as a cofactor.

It is found in the cytoplasm. It catalyses the reaction D-ribose 5-phosphate + ATP = 5-phospho-alpha-D-ribose 1-diphosphate + AMP + H(+). It participates in metabolic intermediate biosynthesis; 5-phospho-alpha-D-ribose 1-diphosphate biosynthesis; 5-phospho-alpha-D-ribose 1-diphosphate from D-ribose 5-phosphate (route I): step 1/1. Its function is as follows. Involved in the biosynthesis of the central metabolite phospho-alpha-D-ribosyl-1-pyrophosphate (PRPP) via the transfer of pyrophosphoryl group from ATP to 1-hydroxyl of ribose-5-phosphate (Rib-5-P). The protein is Ribose-phosphate pyrophosphokinase of Pasteurella multocida (strain Pm70).